Consider the following 182-residue polypeptide: Mitochondrial FAD-linked sulfhydryl oxidase erv1 (182 aa).

In terms of domain architecture, ERV/ALR sulfhydryl oxidase spans 75 to 177 (RLPDVAELGR…FNCQVWSKKA (103 aa)). FAD contacts are provided by residues 81 to 87 (ELGRSTW), histidine 91, and tyrosine 120. 2 disulfide bridges follow: cysteine 122–cysteine 125 and cysteine 153–cysteine 170. FAD-binding positions include 153–165 (CEAHNDVNERLGK) and 176–177 (KA).

FAD serves as cofactor.

It localises to the mitochondrion intermembrane space. It catalyses the reaction 2 R'C(R)SH + O2 = R'C(R)S-S(R)CR' + H2O2. FAD-dependent sulfhydryl oxidase that catalyzes disulfide bond formation. Required for the import and folding of small cysteine-containing proteins in the mitochondrial intermembrane space (IMS). This Schizosaccharomyces pombe (strain 972 / ATCC 24843) (Fission yeast) protein is Mitochondrial FAD-linked sulfhydryl oxidase erv1 (erv1).